The following is a 185-amino-acid chain: Ribosome-recycling factor (185 aa).

The span at I142–T164 shows a compositional bias: basic and acidic residues. The tract at residues I142 to D173 is disordered.

Belongs to the RRF family.

The protein resides in the cytoplasm. In terms of biological role, responsible for the release of ribosomes from messenger RNA at the termination of protein biosynthesis. May increase the efficiency of translation by recycling ribosomes from one round of translation to another. The protein is Ribosome-recycling factor of Mycolicibacterium gilvum (strain PYR-GCK) (Mycobacterium gilvum (strain PYR-GCK)).